We begin with the raw amino-acid sequence, 605 residues long: DNA primase (605 aa).

A CHC2-type zinc finger spans residues 37–61 (CPFHADKNPSMHINPIKGFYHCFAC). One can recognise a Toprim domain in the interval 248-329 (KEIIVCEGYM…DGKVAILQGG (82 aa)). 3 residues coordinate Mg(2+): Glu-254, Asp-298, and Asp-300.

The protein belongs to the DnaG primase family. Monomer. Interacts with DnaB. The cofactor is Zn(2+). Mg(2+) is required as a cofactor.

The enzyme catalyses ssDNA + n NTP = ssDNA/pppN(pN)n-1 hybrid + (n-1) diphosphate.. Its function is as follows. RNA polymerase that catalyzes the synthesis of short RNA molecules used as primers for DNA polymerase during DNA replication. The polypeptide is DNA primase (Campylobacter jejuni subsp. jejuni serotype O:2 (strain ATCC 700819 / NCTC 11168)).